We begin with the raw amino-acid sequence, 232 residues long: Ferric nitrobindin-like protein (232 aa).

Residues 1 to 10 (MSENETSKTG) are compositionally biased toward polar residues. The tract at residues 1–33 (MSENETSKTGGNAGVPGSGADAPSLSDSPAISG) is disordered. The short motif at 85-91 (GVWRGEG) is the GXWXGXG element.

Belongs to the nitrobindin family.

This is Ferric nitrobindin-like protein from Corynebacterium efficiens (strain DSM 44549 / YS-314 / AJ 12310 / JCM 11189 / NBRC 100395).